The sequence spans 377 residues: Succinyl-diaminopimelate desuccinylase (377 aa).

Position 67 (His67) interacts with Zn(2+). Residue Asp69 is part of the active site. Asp100 is a binding site for Zn(2+). Glu134 (proton acceptor) is an active-site residue. Zn(2+) contacts are provided by Glu135, Glu163, and His349.

Belongs to the peptidase M20A family. DapE subfamily. Homodimer. Zn(2+) serves as cofactor. Co(2+) is required as a cofactor.

The enzyme catalyses N-succinyl-(2S,6S)-2,6-diaminopimelate + H2O = (2S,6S)-2,6-diaminopimelate + succinate. Its pathway is amino-acid biosynthesis; L-lysine biosynthesis via DAP pathway; LL-2,6-diaminopimelate from (S)-tetrahydrodipicolinate (succinylase route): step 3/3. Its function is as follows. Catalyzes the hydrolysis of N-succinyl-L,L-diaminopimelic acid (SDAP), forming succinate and LL-2,6-diaminopimelate (DAP), an intermediate involved in the bacterial biosynthesis of lysine and meso-diaminopimelic acid, an essential component of bacterial cell walls. This Dechloromonas aromatica (strain RCB) protein is Succinyl-diaminopimelate desuccinylase.